A 434-amino-acid chain; its full sequence is Nuclear envelope integral membrane protein 1b (434 aa).

The first 29 residues, M1–C29, serve as a signal peptide directing secretion. Helical transmembrane passes span P151–S171, L175–F195, P206–F226, Y239–G259, and L280–F300. The segment at F176–Q287 is a; required for its colocalization with lamins at the nuclear envelope. The Nuclear localization signal signature appears at R317 to K325. Residues P326–E395 form a b; interaction with ran region. Positions P326–F434 are interaction with banf1-a and banf1-b. The BAF-binding site (BBS); essential for interaction with banf1-a, banf1-b and ran stretch occupies residues S368–R375.

It belongs to the NEMP family. Interacts with banf1-a and banf1-b. Interacts with ran-gtp. In terms of processing, phosphorylated.

The protein localises to the nucleus inner membrane. It localises to the nucleus envelope. Its function is as follows. In concert with ran, required for proper eye development. May be involved in the expression of early eye marker genes. Contributes to nuclear envelope stiffness in germ cells. Required for fertility. Essential for normal erythropoiesis. Required for efficient nuclear envelope opening and enucleation during the late stages of erythroblast maturation. The protein is Nuclear envelope integral membrane protein 1b (nemp1b) of Xenopus laevis (African clawed frog).